Consider the following 176-residue polypeptide: Centromere protein R (176 aa).

K8 participates in a covalent cross-link: Glycyl lysine isopeptide (Lys-Gly) (interchain with G-Cter in SUMO2). Position 17 is a phosphoserine (S17). The tract at residues 20–50 is DD1; it reads PSKIVRKKSITAYSPTTGTYQLSPFSSPATP. K22 participates in a covalent cross-link: Glycyl lysine isopeptide (Lys-Gly) (interchain with G-Cter in SUMO2). The residue at position 28 (S28) is a Phosphoserine. Residues 34–48 are compositionally biased toward polar residues; sequence PTTGTYQLSPFSSPA. Residues 34 to 78 are disordered; that stretch reads PTTGTYQLSPFSSPATPKEQEHRNGPSNETRKRSNLSSPVRQEST. Residues 51–65 are compositionally biased toward basic and acidic residues; sequence KEQEHRNGPSNETRK. Residues 63-66 carry the Nuclear localization signal motif; sequence TRKR. S71 carries the post-translational modification Phosphoserine. The stretch at 82 to 112 forms a coiled coil; that stretch reads RDGFMVLLSKIEISSEKTMEIMKNLSSIQAL. Residues 171-175 carry the LXXIL motif motif; the sequence is LKAIL.

In terms of assembly, homodimer; mediated by the coiled coil domain. Interacts with CCNA2 and MTA1. Interacts with NFKB1 NF-kappa-B subunit. Component of the CENPA-CAD complex, composed of CENPI, CENPK, CENPL, CENPO, CENPP, CENPQ, CENPR and CENPS. The CENPA-CAD complex interacts with the CENPA-NAC complex, at least composed of CENPA, CENPC, CENPH, CENPM, CENPN, CENPT and CENPU. Interacts with TASOR. Expressed in the spermatogonia and spermatocytes.

It localises to the nucleus. The protein resides in the chromosome. The protein localises to the centromere. It is found in the kinetochore. In terms of biological role, transcription coregulator that can have both coactivator and corepressor functions. Involved in the coactivation of nuclear receptors for retinoid X (RXRs) and thyroid hormone (TRs) in a ligand-dependent fashion. In contrast, it does not coactivate nuclear receptors for retinoic acid, vitamin D, progesterone receptor, nor glucocorticoid. Acts as a coactivator for estrogen receptor alpha. Acts as a transcriptional corepressor via its interaction with the NFKB1 NF-kappa-B subunit, possibly by interfering with the transactivation domain of NFKB1. Induces apoptosis in breast cancer cells, but not in other cancer cells, via a caspase-2 mediated pathway that involves mitochondrial membrane permeabilization but does not require other caspases. May also act as an inhibitor of cyclin A-associated kinase. Also acts a component of the CENPA-CAD (nucleosome distal) complex, a complex recruited to centromeres which is involved in assembly of kinetochore proteins, mitotic progression and chromosome segregation. May be involved in incorporation of newly synthesized CENPA into centromeres via its interaction with the CENPA-NAC complex. The sequence is that of Centromere protein R (Itgb3bp) from Mus musculus (Mouse).